The following is a 276-amino-acid chain: Rhomboid protease GlpG (276 aa).

6 helical membrane-spanning segments follow: residues 94 to 114 (GPVT…MSLI), 142 to 162 (IFMH…WYLG), 169 to 189 (LGSG…GYVQ), 192 to 212 (FSGP…GYVW), 229 to 249 (LIIF…GMSM), and 250 to 270 (ANGA…VDTL). Ser201 (nucleophile) is an active-site residue. Residue His254 is part of the active site.

This sequence belongs to the peptidase S54 family.

Its subcellular location is the cell inner membrane. It catalyses the reaction Cleaves type-1 transmembrane domains using a catalytic dyad composed of serine and histidine that are contributed by different transmembrane domains.. Its function is as follows. Rhomboid-type serine protease that catalyzes intramembrane proteolysis. The protein is Rhomboid protease GlpG of Salmonella paratyphi A (strain ATCC 9150 / SARB42).